The chain runs to 342 residues: N-acetyl-gamma-glutamyl-phosphate reductase (342 aa).

Cys149 is an active-site residue.

This sequence belongs to the NAGSA dehydrogenase family. Type 1 subfamily.

Its subcellular location is the cytoplasm. The catalysed reaction is N-acetyl-L-glutamate 5-semialdehyde + phosphate + NADP(+) = N-acetyl-L-glutamyl 5-phosphate + NADPH + H(+). The protein operates within amino-acid biosynthesis; L-arginine biosynthesis; N(2)-acetyl-L-ornithine from L-glutamate: step 3/4. Functionally, catalyzes the NADPH-dependent reduction of N-acetyl-5-glutamyl phosphate to yield N-acetyl-L-glutamate 5-semialdehyde. The protein is N-acetyl-gamma-glutamyl-phosphate reductase of Thiobacillus denitrificans (strain ATCC 25259 / T1).